The following is a 482-amino-acid chain: MPQKIVVVGAGPVGSLAALYAAVRGHDVEIYELRSDLRNSEHSSNISQSINLALSERGINSLRKTGLPDLADAVLAETFPMHGRMIHVRKHGQYVRQAQAYDAHGRNLLAMDRTGLNKTLLDHLNSMPNVTFFFHRKLVSVDFRKKLAWFENRTKTDPAKSDDIEVSFDLMIGADGAHSAVRYHLMKFVPMSYQQEYIDKLWCQFHVPPSDKGDFRIPPNYLHIWPQDDAMFIALPNLDKSFTSTLFLTRSGFEELVASGKVVEYFDEKFPGVVPELITEDELRKQFNEHDHFPLISIKCSPYHFGSTGVIVGDSAHAMVPFYGQGMNAGLEDVRVLFEILDKYPGDQAKALSEYSEQRTPDAQTINDLALGNYREMASDVKKPLYLLRKWIEEKLYIYVPSAGWATQYSRVTFSNMRYSEVQAAAQRQAKILNGIVGVTTLSLIGSAALWLGRTGGLQQAKQNILRSICLLAQQAQKVTKG.

This sequence belongs to the aromatic-ring hydroxylase family. KMO subfamily. FAD is required as a cofactor.

It localises to the mitochondrion outer membrane. It carries out the reaction L-kynurenine + NADPH + O2 + H(+) = 3-hydroxy-L-kynurenine + NADP(+) + H2O. It participates in cofactor biosynthesis; NAD(+) biosynthesis; quinolinate from L-kynurenine: step 1/3. Functionally, catalyzes the hydroxylation of L-kynurenine (L-Kyn) to form 3-hydroxy-L-kynurenine (L-3OHKyn). Required for synthesis of quinolinic acid. This Phaeosphaeria nodorum (strain SN15 / ATCC MYA-4574 / FGSC 10173) (Glume blotch fungus) protein is Kynurenine 3-monooxygenase.